Here is a 4760-residue protein sequence, read N- to C-terminus: Nonribosomal peptide synthetase cm3A (4760 aa).

The segment covering 1-12 (MKHLASSENMPT) has biased composition (polar residues). The segment at 1-24 (MKHLASSENMPTPAQDRAPSPSAM) is disordered. The Carrier 1 domain occupies 19–95 (PSPSAMQQEI…ELSRSAECQL (77 aa)). Ser-56 bears the O-(pantetheine 4'-phosphoryl)serine mark. 2 condensation regions span residues 142–570 (QDIF…EIEQ) and 178–571 (PGLS…IEQL). The tract at residues 591 to 984 (DEQARLCPDA…GRRDTQVKLR (394 aa)) is adenylation 1. The region spanning 1120–1197 (REATTLQLQI…KLTEKLGVPE (78 aa)) is the Carrier 2 domain. Residue Ser-1158 is modified to O-(pantetheine 4'-phosphoryl)serine. 2 condensation regions span residues 1210–1654 (FPLS…KTPS) and 1689–2125 (VEDM…NVTT). The tract at residues 2171-2551 (DGDLTYFELD…DRKDWQIKIR (381 aa)) is adenylation 2. Positions 2684 to 2762 (LPSSETEKTV…ELAHAIDQRS (79 aa)) constitute a Carrier 3 domain. Position 2721 is an O-(pantetheine 4'-phosphoryl)serine (Ser-2721). The interval 2811-3203 (VEDIYPCTPL…RFKHIFGQLS (393 aa)) is condensation 4. The adenylation 3 stretch occupies residues 3255 to 3647 (SATTPDRPAV…GRADQQLKIR (393 aa)). A Carrier 4 domain is found at 3783 to 3857 (TRTEELMQSV…QLAQRATTDA (75 aa)). Condensation stretches follow at residues 3869 to 4296 (EFRL…TLLC) and 4340 to 4757 (EDIY…EEMG).

It belongs to the nrps family.

Its pathway is secondary metabolite biosynthesis. Nonribosomal peptide synthetase; part of the gene cluster that mediates the biosynthesis of beauveriolides I and III, cyclodepsipeptides acting as inhibitors of the acyl-CoA:cholesterol acyltransferase. The HR-PKS cm3B initiates the biosynthesis of beauveriolides by iteratively catalyzing the formation of the linear polyketide chain. The ATP-dependent acetyl-CoA ligase cm3D converts the polyketide carboxylic acid to a CoA thioester which id shuttled to the first T domain in the NRPS cm3A by the acetyltransferase cm3C. Cm3A contains 13 domains and assembles the polyketide chain, L-phenylalanine, L-alanine, and D-leucine (or D-allo-isoleucine) to form beauveriolide I (or beauveriolide III). The production of both beauveriolides I and III suggests the substrate adaptability of cm3B, using different amino acids as substrates. The protein is Nonribosomal peptide synthetase cm3A of Cordyceps militaris (strain CM01) (Caterpillar fungus).